Consider the following 297-residue polypeptide: MLTFQAFIQSPGETFLNLGFITIRWYGLLISVSVLIGLFISKKLAKARNINPEYISEILPSLIIFSIIGARAYYVIFEWRQYSGENFFTSLELFNNAIKIPSFLAVWEGGIAIHGGLIGGLISIIFFCKSKKIHLKTFIDILIPSIILGQSIGRWGNFFNNEAFGIPTNLPWKLFIPIQNRPLEFINYEFFHPTFLYESLWNLLVFIFLILIFNKQNKTDFFRPGFISCLYLICYSFGRFWIEGLRTDPLCIGGLPPFCDGGIRMAQFISIFLFSSGLIGIFFLRLRTYIGKNRKNG.

A run of 4 helical transmembrane segments spans residues 20-40, 57-77, 107-127, and 133-153; these read FITIRWYGLLISVSVLIGLFI, EILPSLIIFSIIGARAYYVIF, WEGGIAIHGGLIGGLISIIFF, and IHLKTFIDILIPSIILGQSIG. A 1,2-diacyl-sn-glycero-3-phospho-(1'-sn-glycerol) is bound at residue R154. 3 helical membrane-spanning segments follow: residues 193 to 213, 225 to 245, and 266 to 286; these read PTFLYESLWNLLVFIFLILIF, GFISCLYLICYSFGRFWIEGL, and AQFISIFLFSSGLIGIFFLRL.

It belongs to the Lgt family.

It localises to the cell inner membrane. The catalysed reaction is L-cysteinyl-[prolipoprotein] + a 1,2-diacyl-sn-glycero-3-phospho-(1'-sn-glycerol) = an S-1,2-diacyl-sn-glyceryl-L-cysteinyl-[prolipoprotein] + sn-glycerol 1-phosphate + H(+). It participates in protein modification; lipoprotein biosynthesis (diacylglyceryl transfer). Functionally, catalyzes the transfer of the diacylglyceryl group from phosphatidylglycerol to the sulfhydryl group of the N-terminal cysteine of a prolipoprotein, the first step in the formation of mature lipoproteins. The protein is Phosphatidylglycerol--prolipoprotein diacylglyceryl transferase of Prochlorococcus marinus (strain MIT 9301).